The chain runs to 1087 residues: MADHVQSLAQLENLCKQLYETTDTATRLQAEKALVEFTNSPDCLSKCQLLLERGSSSYSQLLAATCLTKLVSRTNNPLPLEQRIDIRNYVLNYLATRPKLATFVTQALIQLYARITKLGWFDCQKDEYVFRNVITDVTRFLQDSVEHCIIGVTILSQLTNEINQADTTHPLTKHRKIASSFRDSSLFDIFTLSCNLLKQASGKNLNLNDESQHGLLMQLLKLTHNCLNFDFIGTSTDESSDDLCTVQIPTSWRSAFLDSSTLQLFFDLYHSIPPSFSPLVLSCLVQIASVRRSLFNNAERAKFLSHLVDGVKRILENPQSLSDPNNYHEFCRLLARLKSNYQLGELVKVENYPEVIRLIANFTVTSLQHWEFAPNSVHYLLSLWQRLAASVPYVKATEPHMLETYTPEVTKAYITSRLESVHIILRDGLEDPLDDTGLVQQQLDQLSTIGRCEYEKTCALLVQLFDQSAQSYQELLQSATASPMDVAVQEGRLTWLVYIIGAVIGGRVSFASTDEQDAMDGELVCRVLQLMNLTDSRLAQAGNEKLELAMLSFFEQFRKIYIGDQVQKSSKLYRRLSEVLGLNDETMVLSVFIGKIITNLKYWGRCEPITSKTLQLLNDLSIGYSSVRKLVKLSAVQFMLNNHTSEHFSFLGINNQSNLTDMRCRTTFYTALGRLLMVDLGEDEDQYEQFMLPLTAAFETVAQMFSTNTFNEQEAKRTLVGLVRDLRGIAFAFNAKTSFMMLFEWIYPSYMPILQRAIELWYHDPACTTPVLKLMAELVHNRSQRLQFDVSSPNGILLFRETSKMITTYGNRILTLGEVPKDQVYALKLKGISICFSMLKAALSGSYVNFGVFRLYGDDALDNALQTFIKLLLSIPHSDLLDYPKLSQSYYSLLEVLTQDHMNFIASLEPHVIMYILSSISEGLTALDTMVCTGCCSCLDHIVTYLFKQLSRSTKKRTTPLTQESDRFLHIMQQHPEMIQQMLSTVLNIIIFEDCRNQWSMSRPLLGLILLNEKYFSDLRNSIVNSQPPEKQQAMHLCFENLMEGIERNLLTKNRDRFTQNLSAFRREVNDSMKNSPYGVNSNDMMS.

The Importin N-terminal domain occupies 30-96; that stretch reads AEKALVEFTN…RNYVLNYLAT (67 aa).

Belongs to the exportin family.

The protein localises to the cytoplasm. Its subcellular location is the nucleus. In terms of biological role, mediates the nuclear export of proteins (cargos) with broad substrate specificity. This Gallus gallus (Chicken) protein is Exportin-7 (XPO7).